Reading from the N-terminus, the 78-residue chain is Lantibiotic cinnamycin (78 aa).

The propeptide occupies 1 to 59 (MTASILQQSVVDADFRAALLENPAAFGASAAALPTPVEAQDQASLDFWTKDIAATEAFA). Cross-links (beta-methyllanthionine (Cys-Thr)) lie at residues 60–77 (CRQS…DGNT) and 64–70 (CSFGPFT). The lanthionine (Ser-Cys) cross-link spans 63 to 73 (SCSFGPFTFVC). The segment at residues 65–78 (SFGPFTFVCDGNTK) is a cross-link (lysinoalanine (Ser-Lys)). A (3R)-3-hydroxyaspartate modification is found at D74.

Belongs to the type B lantibiotic family. In terms of processing, maturation of lantibiotics involves the enzymatic conversion of Thr, and Ser into dehydrated AA and the formation of thioether bonds with cysteine or the formation of dialkylamine bonds with lysine. This is followed by membrane translocation and cleavage of the modified precursor.

Functionally, can act as inhibitor of the enzyme phospholipase A2, and of the angiotensin-converting enzyme. Shows inhibitory activities against herpes simplex virus and immunopotentiating activities. Its antimicrobial activities are not very pronounced. This Streptomyces griseoverticillatus (Streptoverticillium griseoverticillatum) protein is Lantibiotic cinnamycin (cinA).